Reading from the N-terminus, the 179-residue chain is ATP synthase subunit delta (179 aa).

The protein belongs to the ATPase delta chain family. In terms of assembly, F-type ATPases have 2 components, F(1) - the catalytic core - and F(0) - the membrane proton channel. F(1) has five subunits: alpha(3), beta(3), gamma(1), delta(1), epsilon(1). F(0) has three main subunits: a(1), b(2) and c(10-14). The alpha and beta chains form an alternating ring which encloses part of the gamma chain. F(1) is attached to F(0) by a central stalk formed by the gamma and epsilon chains, while a peripheral stalk is formed by the delta and b chains.

The protein localises to the cell membrane. In terms of biological role, f(1)F(0) ATP synthase produces ATP from ADP in the presence of a proton or sodium gradient. F-type ATPases consist of two structural domains, F(1) containing the extramembraneous catalytic core and F(0) containing the membrane proton channel, linked together by a central stalk and a peripheral stalk. During catalysis, ATP synthesis in the catalytic domain of F(1) is coupled via a rotary mechanism of the central stalk subunits to proton translocation. Its function is as follows. This protein is part of the stalk that links CF(0) to CF(1). It either transmits conformational changes from CF(0) to CF(1) or is implicated in proton conduction. This chain is ATP synthase subunit delta, found in Bacillus sp. (strain PS3).